A 241-amino-acid polypeptide reads, in one-letter code: MNYEEITTTIPGPGVSQDDWNDEFQGCDCETQCSIENQCSCMTGATDNYSEDGRIVATSLLIECSTNCACCLLPYSCRNKVVQNGIKKKLKIFSTSEKGDGVLAEEPIQNREFVCEYAGECIGDQEVKRRCEVFKEEDNYTLTLKEHFGEKEVKTFIDPRLRGNIGRFLNHSCDPNCEIFVVRLGRMIPIAAIFAKREISVGEELSYDYGVSGIDGDNRKLCLCRSENCRKYLPMSVSPIE.

In terms of domain architecture, Pre-SET spans 25–85 (QGCDCETQCS…SCRNKVVQNG (61 aa)). Positions 27, 29, 33, 39, 41, 64, 68, 70, and 77 each coordinate Zn(2+). Residues 88–210 (KKLKIFSTSE…VGEELSYDYG (123 aa)) form the SET domain. S-adenosyl-L-methionine-binding positions include 98–100 (KGD), aspartate 138, tyrosine 140, arginine 167, and 170–171 (NH). Residues cysteine 173, cysteine 222, cysteine 224, and cysteine 229 each coordinate Zn(2+). The Post-SET domain maps to 218–234 (NRKLCLCRSENCRKYLP).

Belongs to the class V-like SAM-binding methyltransferase superfamily. Histone-lysine methyltransferase family. Suvar3-9 subfamily.

It localises to the nucleus. It is found in the chromosome. It carries out the reaction L-lysyl-[histone] + S-adenosyl-L-methionine = N(6)-methyl-L-lysyl-[histone] + S-adenosyl-L-homocysteine + H(+). Its function is as follows. Probable histone methyltransferase required for embryonic development. The chain is Probable histone-lysine N-methyltransferase set-23 from Caenorhabditis briggsae.